The following is a 23-amino-acid chain: Chaperonin GroEL (23 aa).

The protein belongs to the chaperonin (HSP60) family. As to quaternary structure, forms a cylinder of 14 subunits composed of two heptameric rings stacked back-to-back. Interacts with the co-chaperonin GroES. Phosphorylated on threonine.

The protein resides in the cytoplasm. The catalysed reaction is ATP + H2O + a folded polypeptide = ADP + phosphate + an unfolded polypeptide.. Its function is as follows. Together with its co-chaperonin GroES, plays an essential role in assisting protein folding. The GroEL-GroES system forms a nano-cage that allows encapsulation of the non-native substrate proteins and provides a physical environment optimized to promote and accelerate protein folding. The polypeptide is Chaperonin GroEL (Acidithiobacillus ferrooxidans (Thiobacillus ferrooxidans)).